The following is a 496-amino-acid chain: 4-O-methyl-glucuronoyl methylesterase 1 (496 aa).

Positions 1–19 (MKSTVASALLVLAGTAVQA) are cleaved as a signal peptide. The CBM1 domain maps to 20–55 (QSGPWQQCGGIGWQGPFTCVSGHTCQVLNDWYHQCV). Positions 57–151 (GGGPSPPPTS…RLPDPFTFHN (95 aa)) are disordered. Residues 59–125 (GPSPPPTSPP…SPPPTSPPPS (67 aa)) show a composition bias toward pro residues. 3 cysteine pairs are disulfide-bonded: Cys-129-Cys-163, Cys-307-Cys-443, and Cys-339-Cys-415. A GXSYXG catalytic site motif motif is present at residues 306–311 (GCSRNG). Ser-308 acts as the Nucleophile in catalysis. Positions 312, 354, 362, and 406 each coordinate substrate. The Proton donor/acceptor role is filled by His-442.

The protein belongs to the carbohydrate esterase 15 (CE15) family.

The protein resides in the secreted. It catalyses the reaction a 4-O-methyl-alpha-D-glucuronosyl ester derivative + H2O = 4-O-methyl-alpha-D-glucuronate derivative + an alcohol + H(+). In terms of biological role, glucuronoyl esterase which may play a significant role in biomass degradation, as it is considered to disconnect hemicellulose from lignin through the hydrolysis of the ester bond between 4-O-methyl-D-glucuronic acid residues of glucuronoxylans and aromatic alcohols of lignin. Cleaves native lignin-carbohydrate (LC) ester bonds from LC complex preparations of spruce (softwood) and birch (hardwood), containing mainly hemicelluloses with partially acetylated glucomannans in spruce and partially acetylated xylan in birch. Can hydrolyze benzyl glucuronic acid (BnGlcA), allyl glucuronic acid (allylGlcA) and to a lower degree methyl glucuronic acid (MeGlcA) in vitro. The polypeptide is 4-O-methyl-glucuronoyl methylesterase 1 (Sodiomyces alcalophilus (Acremonium alcalophilum)).